Reading from the N-terminus, the 138-residue chain is ATP synthase epsilon chain 2 (138 aa).

The protein belongs to the ATPase epsilon chain family. F-type ATPases have 2 components, CF(1) - the catalytic core - and CF(0) - the membrane proton channel. CF(1) has five subunits: alpha(3), beta(3), gamma(1), delta(1), epsilon(1). CF(0) has three main subunits: a, b and c.

It is found in the cell inner membrane. Functionally, produces ATP from ADP in the presence of a proton gradient across the membrane. The chain is ATP synthase epsilon chain 2 from Syntrophotalea carbinolica (strain DSM 2380 / NBRC 103641 / GraBd1) (Pelobacter carbinolicus).